Reading from the N-terminus, the 178-residue chain is Inner membrane-spanning protein YciB (178 aa).

5 consecutive transmembrane segments (helical) span residues 22-42, 50-70, 72-92, 121-141, and 149-169; these read IFYASGALIAATGLAVAMTYF, ASLITFIMVAVFGTLTLAFHS, LFIKWKVTVIYALFALALLGS, MAWALFFTACALANIYVAFWL, and FKVFGLTALTLVFTVLSVVYI.

The protein belongs to the YciB family.

It localises to the cell inner membrane. Functionally, plays a role in cell envelope biogenesis, maintenance of cell envelope integrity and membrane homeostasis. This is Inner membrane-spanning protein YciB from Photorhabdus laumondii subsp. laumondii (strain DSM 15139 / CIP 105565 / TT01) (Photorhabdus luminescens subsp. laumondii).